The primary structure comprises 214 residues: Ribosomal RNA small subunit methyltransferase G (214 aa).

S-adenosyl-L-methionine contacts are provided by residues Gly81, Met86, 132 to 133 (VE), and Arg147.

Belongs to the methyltransferase superfamily. RNA methyltransferase RsmG family.

The protein localises to the cytoplasm. The catalysed reaction is guanosine(527) in 16S rRNA + S-adenosyl-L-methionine = N(7)-methylguanosine(527) in 16S rRNA + S-adenosyl-L-homocysteine. Specifically methylates the N7 position of guanine in position 527 of 16S rRNA. In Pseudomonas paraeruginosa (strain DSM 24068 / PA7) (Pseudomonas aeruginosa (strain PA7)), this protein is Ribosomal RNA small subunit methyltransferase G.